The following is a 231-amino-acid chain: Homeobox protein engrailed-1a (231 aa).

Disordered stretches follow at residues 1-29 (MEDQRRGQGEEEDDSGSLPSPPLLPAHRN), 43-105 (GCKR…KDSQ), and 121-148 (DRPSSGPRTRKLKKKNNNTESDDKRPRT). Residues 43–56 (GCKRERERVTRDSG) are compositionally biased toward basic and acidic residues. A compositionally biased stretch (low complexity) spans 68-102 (DGVSSSASSTVSSPVSSRQSNKVEQGSSKSSSPSK). The homeobox DNA-binding region spans 143 to 202 (DKRPRTAFTAEQLQRLKAEFQTSRYITEQRRQALARELGLNESQIKIWFQNKRAKIKKSS).

This sequence belongs to the engrailed homeobox family.

The protein resides in the nucleus. The polypeptide is Homeobox protein engrailed-1a (eng1a) (Danio rerio (Zebrafish)).